Consider the following 432-residue polypeptide: Short/branched chain specific acyl-CoA dehydrogenase, mitochondrial (432 aa).

A mitochondrion-targeting transit peptide spans 1–33; that stretch reads MERATVRLLRGGALLRRNFPSCLSSWKTPPHAL. Lysine 70 carries the post-translational modification N6-acetyllysine; alternate. Position 70 is an N6-succinyllysine; alternate (lysine 70). FAD is bound by residues 174–183 and 207–209; these read ICISETGAGS and WIS. Substrate is bound at residue serine 183. Residue serine 183 is modified to Phosphoserine. Tyrosine 229 and tyrosine 283 together coordinate substrate. At lysine 284 the chain carries N6-acetyllysine; alternate. At lysine 284 the chain carries N6-succinyllysine; alternate. 291–294 is a binding site for substrate; sequence NEGR. Residues arginine 319, glutamine 330, and 387 to 391 contribute to the FAD site; that span reads EWMGG. The Proton acceptor role is filled by glutamate 414. 416 to 418 serves as a coordination point for FAD; the sequence is TSN. The residue at position 426 (lysine 426) is an N6-acetyllysine.

It belongs to the acyl-CoA dehydrogenase family. Homotetramer. It depends on FAD as a cofactor.

It is found in the mitochondrion matrix. It carries out the reaction 2-methylbutanoyl-CoA + oxidized [electron-transfer flavoprotein] + H(+) = (2E)-2-methylbut-2-enoyl-CoA + reduced [electron-transfer flavoprotein]. It catalyses the reaction (2S)-2-methylbutanoyl-CoA + oxidized [electron-transfer flavoprotein] + H(+) = (2E)-2-methylbut-2-enoyl-CoA + reduced [electron-transfer flavoprotein]. The catalysed reaction is (2R)-2-methylbutanoyl-CoA + oxidized [electron-transfer flavoprotein] + H(+) = ethylacryloyl-CoA + reduced [electron-transfer flavoprotein]. The enzyme catalyses butanoyl-CoA + oxidized [electron-transfer flavoprotein] + H(+) = (2E)-butenoyl-CoA + reduced [electron-transfer flavoprotein]. It carries out the reaction 2-methylpropanoyl-CoA + oxidized [electron-transfer flavoprotein] + H(+) = 2-methylpropenoyl-CoA + reduced [electron-transfer flavoprotein]. It catalyses the reaction hexanoyl-CoA + oxidized [electron-transfer flavoprotein] + H(+) = (2E)-hexenoyl-CoA + reduced [electron-transfer flavoprotein]. The catalysed reaction is valproyl-CoA + oxidized [electron-transfer flavoprotein] + H(+) = (2E)-2-propylpent-2-enoyl-CoA + reduced [electron-transfer flavoprotein]. It participates in lipid metabolism; mitochondrial fatty acid beta-oxidation. Its pathway is amino-acid degradation; L-isoleucine degradation. In terms of biological role, short and branched chain specific acyl-CoA dehydrogenase that catalyzes the removal of one hydrogen from C-2 and C-3 of the fatty acyl-CoA thioester, resulting in the formation of trans-2-enoyl-CoA. Among the different mitochondrial acyl-CoA dehydrogenases, acts specifically on short and branched chain acyl-CoA derivatives such as (S)-2-methylbutyryl-CoA as well as short straight chain acyl-CoAs such as butyryl-CoA. Plays an important role in the metabolism of L-isoleucine by catalyzing the dehydrogenation of 2-methylbutyryl-CoA, one of the steps of the L-isoleucine catabolic pathway. Can also act on valproyl-CoA, a metabolite of the valproic acid drug. The polypeptide is Short/branched chain specific acyl-CoA dehydrogenase, mitochondrial (ACADSB) (Bos taurus (Bovine)).